The primary structure comprises 1013 residues: Antigenic heat-stable 120 kDa protein (1013 aa).

Disordered stretches follow at residues 1–73 and 348–396; these read DTSE…TSDP and GQSK…PQSQ. Residues 12–27 show a composition bias toward basic and acidic residues; the sequence is EYTEEQKQKLEQEQKE. Low complexity predominate over residues 47–61; the sequence is SASSAQSTPSISALS. Composition is skewed to polar residues over residues 62-73, 348-373, and 380-396; these read GNISPDSQTSDP, GQSK…QYKQ, and PTNQ…PQSQ.

It is found in the cytoplasm. This chain is Antigenic heat-stable 120 kDa protein (sca4), found in Rickettsia rhipicephali.